The sequence spans 293 residues: Ethanolamine ammonia-lyase small subunit (293 aa).

The adenosylcob(III)alamin site is built by V207 and E228.

It belongs to the EutC family. As to quaternary structure, the basic unit is a heterodimer which dimerizes to form tetramers. The heterotetramers trimerize; 6 large subunits form a core ring with 6 small subunits projecting outwards. Requires adenosylcob(III)alamin as cofactor.

The protein localises to the bacterial microcompartment. It carries out the reaction ethanolamine = acetaldehyde + NH4(+). It functions in the pathway amine and polyamine degradation; ethanolamine degradation. Catalyzes the deamination of various vicinal amino-alcohols to oxo compounds. Allows this organism to utilize ethanolamine as the sole source of nitrogen and carbon in the presence of external vitamin B12. In Listeria monocytogenes serovar 1/2a (strain ATCC BAA-679 / EGD-e), this protein is Ethanolamine ammonia-lyase small subunit.